Consider the following 246-residue polypeptide: Probable transcriptional regulatory protein YebC (246 aa).

The tract at residues 1-20 (MAGHSKWANTRHRKAAQDAK) is disordered.

It belongs to the TACO1 family.

The protein resides in the cytoplasm. The sequence is that of Probable transcriptional regulatory protein YebC from Shigella flexneri.